Here is a 143-residue protein sequence, read N- to C-terminus: Large ribosomal subunit protein uL11 (143 aa).

Belongs to the universal ribosomal protein uL11 family. As to quaternary structure, part of the ribosomal stalk of the 50S ribosomal subunit. Interacts with L10 and the large rRNA to form the base of the stalk. L10 forms an elongated spine to which L12 dimers bind in a sequential fashion forming a multimeric L10(L12)X complex. In terms of processing, one or more lysine residues are methylated.

Forms part of the ribosomal stalk which helps the ribosome interact with GTP-bound translation factors. This Treponema denticola (strain ATCC 35405 / DSM 14222 / CIP 103919 / JCM 8153 / KCTC 15104) protein is Large ribosomal subunit protein uL11.